Reading from the N-terminus, the 170-residue chain is Acetyl-CoA decarbonylase/synthase complex subunit epsilon 1 (170 aa).

It belongs to the CdhB family. In terms of assembly, heterotetramer of two alpha and two epsilon subunits. The ACDS complex is made up of alpha, epsilon, beta, gamma and delta subunits with a probable stoichiometry of (alpha(2)epsilon(2))(4)-beta(8)-(gamma(1)delta(1))(8).

The protein operates within one-carbon metabolism; methanogenesis from acetate. Part of a complex that catalyzes the reversible cleavage of acetyl-CoA, allowing growth on acetate as sole source of carbon and energy. The alpha-epsilon subcomponent functions as a carbon monoxide dehydrogenase. The precise role of the epsilon subunit is unclear; it may have a stabilizing role within the alpha(2)epsilon(2) component and/or be involved in electron transfer to FAD during a potential FAD-mediated CO oxidation. The sequence is that of Acetyl-CoA decarbonylase/synthase complex subunit epsilon 1 (cdhB1) from Methanosarcina mazei (strain ATCC BAA-159 / DSM 3647 / Goe1 / Go1 / JCM 11833 / OCM 88) (Methanosarcina frisia).